Reading from the N-terminus, the 231-residue chain is MKVGIIGAMEQEVTILKEAMTNCQTVSKAGCTFFSGQINGVDVVLLQSGIGKVAAAVGTTILLDEYQPDVVINTGSAGGFDSSLNLGDVVISTEVRHHDTDVTAFGYEMGQMAGQPAAFKADEKLMDLAEKALAQMENTHAVRGLICTGDAFVCTAERQEFIRKHFPSVIAVEMEASAIAQTCHQFNTPFVVVRAISDVADKESPMSFEEFLPLAAKSSSEMVCKMLELTK.

The active-site Proton acceptor is Glu-12. Residues Gly-78, Val-153, and 174 to 175 (ME) each bind substrate. The active-site Proton donor is Asp-198.

The protein belongs to the PNP/UDP phosphorylase family. MtnN subfamily.

It catalyses the reaction S-adenosyl-L-homocysteine + H2O = S-(5-deoxy-D-ribos-5-yl)-L-homocysteine + adenine. The enzyme catalyses S-methyl-5'-thioadenosine + H2O = 5-(methylsulfanyl)-D-ribose + adenine. It carries out the reaction 5'-deoxyadenosine + H2O = 5-deoxy-D-ribose + adenine. It participates in amino-acid biosynthesis; L-methionine biosynthesis via salvage pathway; S-methyl-5-thio-alpha-D-ribose 1-phosphate from S-methyl-5'-thioadenosine (hydrolase route): step 1/2. Catalyzes the irreversible cleavage of the glycosidic bond in both 5'-methylthioadenosine (MTA) and S-adenosylhomocysteine (SAH/AdoHcy) to adenine and the corresponding thioribose, 5'-methylthioribose and S-ribosylhomocysteine, respectively. Also cleaves 5'-deoxyadenosine, a toxic by-product of radical S-adenosylmethionine (SAM) enzymes, into 5-deoxyribose and adenine. The chain is 5'-methylthioadenosine/S-adenosylhomocysteine nucleosidase from Vibrio campbellii (strain ATCC BAA-1116).